A 129-amino-acid polypeptide reads, in one-letter code: uncharacterized protein (129 aa).

Belongs to the asfivirus C129R family.

It localises to the virion. Functionally, plays a role in the inhibition of type I interferon signaling pathway. Mechanistically, specifically interacts with 2',3'-cGAMP and cleaves it via its phosphodiesterase activity. In turn, prevents 2',3'-cGAMP interaction with host ER-resident STING1 leading to inhibition of downstream signaling pathway and type I interferon production. This is an uncharacterized protein from African swine fever virus (isolate Pig/Kenya/KEN-50/1950) (ASFV).